A 278-amino-acid polypeptide reads, in one-letter code: S-formylglutathione hydrolase YeiG (278 aa).

Catalysis depends on charge relay system residues Ser145, Asp223, and His256.

It belongs to the esterase D family.

It carries out the reaction S-formylglutathione + H2O = formate + glutathione + H(+). Its function is as follows. Serine hydrolase involved in the detoxification of formaldehyde. Hydrolyzes S-formylglutathione to glutathione and formate. This Shigella boydii serotype 4 (strain Sb227) protein is S-formylglutathione hydrolase YeiG (yeiG).